The following is a 318-amino-acid chain: Polyprenal reductase (318 aa).

Topologically, residues 1–19 (MAPWAAAQLWALNPLRALW) are cytoplasmic. Residues 20-40 (LTLAAAFLLTLLLQLVPPGLL) traverse the membrane as a helical segment. At 41-80 (PGCALFQDLIRYGKTKREGQSRPAVCRVFDVPKRYFSHFY) the chain is on the lumenal side. The chain crosses the membrane as a helical span at residues 81-101 (IISALWNGFLLWHLTQSVFLG). At 102-119 (VPFPNWLHGLLRILGASQ) the chain is on the cytoplasmic side. The chain crosses the membrane as a helical span at residues 120-140 (FQGGELALSAFLVLVFLWLHS). At 141–156 (LRRLFECFYVSVFSNT) the chain is on the lumenal side. The helical transmembrane segment at 157–177 (VIHIVQYCFGLVYYVLTGLTV) threads the bilayer. At 178–194 (LSQVPMDGRNAYVIGKN) the chain is on the cytoplasmic side. The chain crosses the membrane as a helical span at residues 195–215 (LLMQARWFHILGMLMFIWSSV). At 216–265 (HQYKCHVILGNLRKNKAGVVIHCNHRIPFGDWFEYVSSPNYLAELMIYIS) the chain is on the lumenal side. The helical transmembrane segment at 266–286 (MAVTFGFHNLTWWLVVTYVFF) threads the bilayer. The Cytoplasmic segment spans residues 287–318 (SQALSAFLSHKFYKSKFVSYPKHRKAFLPFLF).

It belongs to the steroid 5-alpha reductase family. Polyprenal reductase subfamily.

It localises to the endoplasmic reticulum membrane. It carries out the reaction a di-trans,poly-cis-dolichal + NADP(+) = a di-trans,poly-cis-polyprenal + NADPH + H(+). The catalysed reaction is a 3-oxo-5alpha-steroid + NADP(+) = a 3-oxo-Delta(4)-steroid + NADPH + H(+). The enzyme catalyses androst-4-ene-3,17-dione + NADPH + H(+) = 5alpha-androstan-3,17-dione + NADP(+). It catalyses the reaction 17beta-hydroxy-5alpha-androstan-3-one + NADP(+) = testosterone + NADPH + H(+). The protein operates within protein modification; protein glycosylation. Functionally, plays a key role in early steps of protein N-linked glycosylation by being involved in the conversion of polyprenol into dolichol. Acts as a polyprenal reductase that mediates the reduction of polyprenal into dolichal in a NADP-dependent mechanism. Dolichols are required for the synthesis of dolichol-linked monosaccharides and the oligosaccharide precursor used for N-glycosylation. Also able to convert testosterone (T) into 5-alpha-dihydrotestosterone (DHT). In Ailuropoda melanoleuca (Giant panda), this protein is Polyprenal reductase (SRD5A3).